Here is a 312-residue protein sequence, read N- to C-terminus: MARTDDDNWDLTSSVGVTATIVAVGRALATKDPRGLINDPFAEPLVRAVGLDLFTKMMDGELDMSTIADVSPAVAQAMVYGNAVRTKYFDDYLLNATAGGIRQVAILASGLDSRAYRLPWPTRTVVYEIDQPKVMEFKTTTLADLGAEPSAIRRAVPIDLRADWPTALQAAGFDSAAPTAWLAEGLLIYLKPQTQDRLFDNITALSAPGSMVATEFVTGIADFSAERARTISNPFRCHGVDVDLASLVYTGPRNHVLDYLAAKGWQPEGVSLAELFRRSGLDVRAADDDTIFISGCLTDHSSISPPTAAGWR.

S-adenosyl-L-methionine is bound by residues Asp130 and 159–160 (DL).

This sequence belongs to the UPF0677 family.

Its function is as follows. Exhibits S-adenosyl-L-methionine-dependent methyltransferase activity. The chain is Putative S-adenosyl-L-methionine-dependent methyltransferase BCG_1768c from Mycobacterium bovis (strain BCG / Pasteur 1173P2).